Here is a 195-residue protein sequence, read N- to C-terminus: dTDP-4-dehydrorhamnose 3,5-epimerase (195 aa).

Substrate-binding positions include Arg31, Glu36, 54–56 (QDN), and Arg67. Catalysis depends on His70, which acts as the Proton acceptor. Lys80 and His127 together coordinate substrate. Tyr140 (proton donor) is an active-site residue. Substrate is bound by residues Asp151 and Lys176.

The protein belongs to the dTDP-4-dehydrorhamnose 3,5-epimerase family. In terms of assembly, homodimer.

It carries out the reaction dTDP-4-dehydro-6-deoxy-alpha-D-glucose = dTDP-4-dehydro-beta-L-rhamnose. It functions in the pathway carbohydrate biosynthesis; dTDP-L-rhamnose biosynthesis. Catalyzes the epimerization of the C3' and C5'positions of dTDP-6-deoxy-D-xylo-4-hexulose, forming dTDP-6-deoxy-L-lyxo-4-hexulose. The protein is dTDP-4-dehydrorhamnose 3,5-epimerase of Sinorhizobium fredii (strain NBRC 101917 / NGR234).